The sequence spans 354 residues: Protein-glutamate methylesterase/protein-glutamine glutaminase of group 3 operon (354 aa).

In terms of domain architecture, Response regulatory spans 3–121; the sequence is RILLATSTVE…MQLEQPAIEK (119 aa). One can recognise a CheB-type methylesterase domain in the interval 158–340; the sequence is PIGIVGIAAS…LESIAENITA (183 aa). Active-site residues include S167, H194, and D287.

It belongs to the CheB family.

It is found in the cytoplasm. It carries out the reaction [protein]-L-glutamate 5-O-methyl ester + H2O = L-glutamyl-[protein] + methanol + H(+). It catalyses the reaction L-glutaminyl-[protein] + H2O = L-glutamyl-[protein] + NH4(+). In terms of biological role, involved in chemotaxis. Part of a chemotaxis signal transduction system that modulates chemotaxis in response to various stimuli. Catalyzes the demethylation of specific methylglutamate residues introduced into the chemoreceptors (methyl-accepting chemotaxis proteins or MCP) by CheR. Also mediates the irreversible deamidation of specific glutamine residues to glutamic acid. This is Protein-glutamate methylesterase/protein-glutamine glutaminase of group 3 operon from Rhizobium meliloti (strain 1021) (Ensifer meliloti).